The chain runs to 486 residues: FAD-dependent oxidoreductase domain-containing protein 1 (486 aa).

The chain crosses the membrane as a helical span at residues 62–82; sequence EHSDVVIVGGGVLGLSVAYWL.

In terms of assembly, associates with components of the mitochondrial respiratory chain complex I. FAD serves as cofactor.

The protein localises to the mitochondrion inner membrane. In terms of biological role, required for the assembly of the mitochondrial membrane respiratory chain NADH dehydrogenase (Complex I). Involved in mid-late stages of complex I assembly. The protein is FAD-dependent oxidoreductase domain-containing protein 1 of Homo sapiens (Human).